Reading from the N-terminus, the 192-residue chain is Fe/S biogenesis protein NfuA (192 aa).

[4Fe-4S] cluster contacts are provided by C149 and C152.

This sequence belongs to the NfuA family. Homodimer. [4Fe-4S] cluster serves as cofactor.

Functionally, involved in iron-sulfur cluster biogenesis. Binds a 4Fe-4S cluster, can transfer this cluster to apoproteins, and thereby intervenes in the maturation of Fe/S proteins. Could also act as a scaffold/chaperone for damaged Fe/S proteins. This Shewanella halifaxensis (strain HAW-EB4) protein is Fe/S biogenesis protein NfuA.